Consider the following 423-residue polypeptide: D-tagatose-1,6-bisphosphate aldolase subunit GatZ (423 aa).

The protein belongs to the GatZ/KbaZ family. GatZ subfamily. In terms of assembly, forms a complex with GatY.

The protein operates within carbohydrate metabolism; D-tagatose 6-phosphate degradation; D-glyceraldehyde 3-phosphate and glycerone phosphate from D-tagatose 6-phosphate: step 2/2. Component of the tagatose-1,6-bisphosphate aldolase GatYZ that is required for full activity and stability of the Y subunit. Could have a chaperone-like function for the proper and stable folding of GatY. When expressed alone, GatZ does not show any aldolase activity. Is involved in the catabolism of galactitol. The sequence is that of D-tagatose-1,6-bisphosphate aldolase subunit GatZ from Salmonella gallinarum (strain 287/91 / NCTC 13346).